A 740-amino-acid chain; its full sequence is Ribosomal protein S6 kinase alpha-3 (740 aa).

A disordered region spans residues 1 to 26 (MPLAQLADPWQKMAVESPSDSAENGQ). In terms of domain architecture, Protein kinase 1 spans 68-327 (FELLKVLGQG…VEEIKRHSFF (260 aa)). ATP is bound by residues 74-82 (LGQGSFGKV) and Lys-100. Asp-193 (proton acceptor) is an active-site residue. Ser-227 bears the Phosphoserine; by PDPK1 mark. Residues 328-397 (STIDWNKLYR…VAITSDDESQ (70 aa)) form the AGC-kinase C-terminal domain. Thr-365 bears the Phosphothreonine mark. Ser-369 and Ser-375 each carry phosphoserine. Ser-386 is modified (phosphoserine; by autocatalysis and MAPKAPK2). Phosphoserine is present on Ser-415. Residues 422–679 (YEVKEDIGVG…AALVLRHPWI (258 aa)) form the Protein kinase 2 domain. ATP-binding positions include 428–436 (IGVGSYSVC) and Lys-451. At Tyr-529 the chain carries Phosphotyrosine; by FGFR3. Asp-539 acts as the Proton acceptor in catalysis. Ser-556 and Ser-715 each carry phosphoserine.

It belongs to the protein kinase superfamily. AGC Ser/Thr protein kinase family. S6 kinase subfamily. As to quaternary structure, forms a complex with either MAPK1/ERK2 or MAPK3/ERK1 in quiescent cells. Transiently dissociates following mitogenic stimulation. Interacts with NFATC4, ETV1/ER81 and FGFR1. Mg(2+) serves as cofactor. In terms of processing, activated by phosphorylation at Ser-227 by PDPK1. Autophosphorylated on Ser-386, as part of the activation process. May be phosphorylated at Thr-365 and Ser-369 by MAPK1/ERK2 and MAPK3/ERK1. Can also be activated via phosphorylation at Ser-386 by MAPKAPK2. Post-translationally, N-terminal myristoylation results in an activated kinase in the absence of added growth factors. Intestine, thymus, lung, heart and brain.

It is found in the nucleus. The protein resides in the cytoplasm. The enzyme catalyses L-seryl-[protein] + ATP = O-phospho-L-seryl-[protein] + ADP + H(+). The catalysed reaction is L-threonyl-[protein] + ATP = O-phospho-L-threonyl-[protein] + ADP + H(+). Upon extracellular signal or mitogen stimulation, phosphorylated at Thr-577 in the C-terminal kinase domain (CTKD) by MAPK1/ERK2 and MAPK3/ERK1. The activated CTKD then autophosphorylates Ser-386, allowing binding of PDPK1, which in turn phosphorylates Ser-227 in the N-terminal kinase domain (NTDK) leading to the full activation of the protein and subsequent phosphorylation of the substrates by the NTKD. Serine/threonine-protein kinase that acts downstream of ERK (MAPK1/ERK2 and MAPK3/ERK1) signaling and mediates mitogenic and stress-induced activation of the transcription factors CREB1, ETV1/ER81 and NR4A1/NUR77, regulates translation through RPS6 and EIF4B phosphorylation, and mediates cellular proliferation, survival, and differentiation by modulating mTOR signaling and repressing pro-apoptotic function of BAD and DAPK1. In fibroblast, is required for EGF-stimulated phosphorylation of CREB1 and histone H3 at 'Ser-10', which results in the subsequent transcriptional activation of several immediate-early genes. In response to mitogenic stimulation (EGF and PMA), phosphorylates and activates NR4A1/NUR77 and ETV1/ER81 transcription factors and the cofactor CREBBP. Upon insulin-derived signal, acts indirectly on the transcription regulation of several genes by phosphorylating GSK3B at 'Ser-9' and inhibiting its activity. Phosphorylates RPS6 in response to serum or EGF via an mTOR-independent mechanism and promotes translation initiation by facilitating assembly of the preinitiation complex. In response to insulin, phosphorylates EIF4B, enhancing EIF4B affinity for the EIF3 complex and stimulating cap-dependent translation. Is involved in the mTOR nutrient-sensing pathway by directly phosphorylating TSC2 at 'Ser-1798', which potently inhibits TSC2 ability to suppress mTOR signaling, and mediates phosphorylation of RPTOR, which regulates mTORC1 activity and may promote rapamycin-sensitive signaling independently of the PI3K/AKT pathway. Mediates cell survival by phosphorylating the pro-apoptotic proteins BAD and DAPK1 and suppressing their pro-apoptotic function. Promotes the survival of hepatic stellate cells by phosphorylating CEBPB in response to the hepatotoxin carbon tetrachloride (CCl4). Is involved in cell cycle regulation by phosphorylating the CDK inhibitor CDKN1B, which promotes CDKN1B association with 14-3-3 proteins and prevents its translocation to the nucleus and inhibition of G1 progression. In LPS-stimulated dendritic cells, is involved in TLR4-induced macropinocytosis, and in myeloma cells, acts as effector of FGFR3-mediated transformation signaling, after direct phosphorylation at Tyr-529 by FGFR3. Negatively regulates EGF-induced MAPK1/3 phosphorylation via phosphorylation of SOS1. Phosphorylates SOS1 at 'Ser-1134' and 'Ser-1161' that create YWHAB and YWHAE binding sites and which contribute to the negative regulation of MAPK1/3 phosphorylation. Phosphorylates EPHA2 at 'Ser-897', the RPS6KA-EPHA2 signaling pathway controls cell migration. Acts as a regulator of osteoblast differentiation by mediating phosphorylation of ATF4, thereby promoting ATF4 transactivation activity. The protein is Ribosomal protein S6 kinase alpha-3 (Rps6ka3) of Mus musculus (Mouse).